Here is a 236-residue protein sequence, read N- to C-terminus: Large ribosomal subunit protein uL3 (236 aa).

Disordered stretches follow at residues 132–153 and 200–236; these read SNRA…GMAQ and KGGD…KKGG. The span at 133–145 shows a compositional bias: polar residues; sequence NRASHGNSRSHNV. At glutamine 153 the chain carries N5-methylglutamine. Over residues 206-216 the composition is skewed to polar residues; sequence VSPSIRSARPT. The span at 217–228 shows a compositional bias: low complexity; it reads NNGNVNAAAKGG.

The protein belongs to the universal ribosomal protein uL3 family. Part of the 50S ribosomal subunit. Forms a cluster with proteins L14 and L19. Post-translationally, methylated by PrmB.

Its function is as follows. One of the primary rRNA binding proteins, it binds directly near the 3'-end of the 23S rRNA, where it nucleates assembly of the 50S subunit. In Nitrosospira multiformis (strain ATCC 25196 / NCIMB 11849 / C 71), this protein is Large ribosomal subunit protein uL3.